A 207-amino-acid polypeptide reads, in one-letter code: Large ribosomal subunit protein uL4 (207 aa).

Residues 48–70 (KAQKTRSEVSGGGAKPWRQKGTG) form a disordered region.

It belongs to the universal ribosomal protein uL4 family. In terms of assembly, part of the 50S ribosomal subunit.

Its function is as follows. One of the primary rRNA binding proteins, this protein initially binds near the 5'-end of the 23S rRNA. It is important during the early stages of 50S assembly. It makes multiple contacts with different domains of the 23S rRNA in the assembled 50S subunit and ribosome. Forms part of the polypeptide exit tunnel. This is Large ribosomal subunit protein uL4 from Francisella tularensis subsp. mediasiatica (strain FSC147).